A 490-amino-acid chain; its full sequence is Colicin-5 (490 aa).

Positions 1 to 20 (MDKVTDNSPDVESTESTEGS) are enriched in polar residues. 2 disordered regions span residues 1–29 (MDKV…VDTG) and 146–171 (QKAR…EIAR). The span at 146 to 170 (QKAREEAEAAEKALREAERQRDEIA) shows a compositional bias: basic and acidic residues. Residues 447–467 (IVALMFSFIVGVPLGFWGIAI) form a helical membrane-spanning segment.

Belongs to the channel forming colicin family.

It localises to the host membrane. This colicin is a channel-forming colicin. This class of transmembrane toxins depolarize the cytoplasmic membrane, leading to dissipation of cellular energy. Functionally, colicins are polypeptide toxins produced by and active against E.coli and closely related bacteria. This chain is Colicin-5 (cfa), found in Escherichia coli.